The primary structure comprises 89 residues: Putative regulatory protein CYA_2696 (89 aa).

This sequence belongs to the RemA family.

The polypeptide is Putative regulatory protein CYA_2696 (Synechococcus sp. (strain JA-3-3Ab) (Cyanobacteria bacterium Yellowstone A-Prime)).